Consider the following 415-residue polypeptide: Gamma-glutamyl phosphate reductase (415 aa).

It belongs to the gamma-glutamyl phosphate reductase family.

Its subcellular location is the cytoplasm. The enzyme catalyses L-glutamate 5-semialdehyde + phosphate + NADP(+) = L-glutamyl 5-phosphate + NADPH + H(+). It participates in amino-acid biosynthesis; L-proline biosynthesis; L-glutamate 5-semialdehyde from L-glutamate: step 2/2. Catalyzes the NADPH-dependent reduction of L-glutamate 5-phosphate into L-glutamate 5-semialdehyde and phosphate. The product spontaneously undergoes cyclization to form 1-pyrroline-5-carboxylate. The polypeptide is Gamma-glutamyl phosphate reductase (Clostridium perfringens (strain 13 / Type A)).